The following is a 324-amino-acid chain: MTDSAPHSAVAAGLATVTPAGTVLDTWYPEPRLGVPAGARPGTTRLGALEISGELGPDYGGLVRRDESRGVEVIAVRTVIPDLAAAPVDTHDVWLRLHLLSHRLVSPRSISMDGVFGLLTNVAWTSAGPVEAATFNVHRLRAALGHVTVFGVDKFPRMVDYVIPSGVRVADGDRVRLGAHLAEGTTVMHEGFVNYNAGTLGPSMVEGRISAGVVVGPNSDIGGGASIMGTLSGGGKQVVSIGSGCLLGANAGIGISLGDNCVVEAGCYVTAGSRVTLPDGSVVKAAELSGRDGLLFRRNSVSGALEALPRTGTWGELNAQLHAN.

Asp173 and Glu190 together coordinate Mg(2+). Catalysis depends on Glu206, which acts as the Acyl-anhydride intermediate. Succinyl-CoA contacts are provided by residues Arg208, Gly223, Ser226, Ala249, Glu264–Ala265, Gly272, Lys284, and Arg297–Ser300.

Belongs to the type 2 tetrahydrodipicolinate N-succinyltransferase family. Homotrimer.

Its subcellular location is the cytoplasm. The catalysed reaction is (S)-2,3,4,5-tetrahydrodipicolinate + succinyl-CoA + H2O = (S)-2-succinylamino-6-oxoheptanedioate + CoA. It participates in amino-acid biosynthesis; L-lysine biosynthesis via DAP pathway; LL-2,6-diaminopimelate from (S)-tetrahydrodipicolinate (succinylase route): step 1/3. Catalyzes the conversion of the cyclic tetrahydrodipicolinate (THDP) into the acyclic N-succinyl-L-2-amino-6-oxopimelate using succinyl-CoA. This Geodermatophilus obscurus (strain ATCC 25078 / DSM 43160 / JCM 3152 / CCUG 61914 / KCC A-0152 / KCTC 9177 / NBRC 13315 / NRRL B-3577 / G-20) protein is 2,3,4,5-tetrahydropyridine-2,6-dicarboxylate N-succinyltransferase.